A 44-amino-acid polypeptide reads, in one-letter code: Photosystem II reaction center protein J (44 aa).

A helical membrane pass occupies residues 12 to 32 (IPLWIVGFVVGSLALGLLGIL).

This sequence belongs to the PsbJ family. As to quaternary structure, PSII is composed of 1 copy each of membrane proteins PsbA, PsbB, PsbC, PsbD, PsbE, PsbF, PsbH, PsbI, PsbJ, PsbK, PsbL, PsbM, PsbT, PsbY, PsbZ, Psb30/Ycf12, at least 3 peripheral proteins of the oxygen-evolving complex and a large number of cofactors. It forms dimeric complexes.

The protein localises to the plastid. The protein resides in the chloroplast thylakoid membrane. Its function is as follows. One of the components of the core complex of photosystem II (PSII). PSII is a light-driven water:plastoquinone oxidoreductase that uses light energy to abstract electrons from H(2)O, generating O(2) and a proton gradient subsequently used for ATP formation. It consists of a core antenna complex that captures photons, and an electron transfer chain that converts photonic excitation into a charge separation. The polypeptide is Photosystem II reaction center protein J (Bigelowiella natans (Pedinomonas minutissima)).